A 220-amino-acid chain; its full sequence is GILT-like protein CBG03282 (220 aa).

The signal sequence occupies residues 1–22 (MTIIRTLFVYYSFLFILVLCSS). Asn-131 is a glycosylation site (N-linked (GlcNAc...) asparagine).

Belongs to the GILT family.

It localises to the secreted. In Caenorhabditis briggsae, this protein is GILT-like protein CBG03282.